We begin with the raw amino-acid sequence, 67 residues long: Beta-defensin 103A (67 aa).

The first 22 residues, 1–22 (MRIHYLLFTLLFLFLVPVPGHG), serve as a signal peptide directing secretion. 3 disulfide bridges follow: cysteine 33–cysteine 62, cysteine 40–cysteine 55, and cysteine 45–cysteine 63.

This sequence belongs to the beta-defensin family.

The protein localises to the secreted. Its function is as follows. Exhibits antimicrobial activity against Gram-positive and Gram-negative bacteria. This chain is Beta-defensin 103A (DEFB103A), found in Gorilla gorilla gorilla (Western lowland gorilla).